A 260-amino-acid polypeptide reads, in one-letter code: 3'-5' ssDNA/RNA exonuclease TatD (260 aa).

3 residues coordinate a divalent metal cation: E92, H128, and H153.

It belongs to the metallo-dependent hydrolases superfamily. TatD-type hydrolase family. TatD subfamily. As to quaternary structure, monomer. The cofactor is Mg(2+).

The protein localises to the cytoplasm. Functionally, 3'-5' exonuclease that prefers single-stranded DNA and RNA. May play a role in the H(2)O(2)-induced DNA damage repair. The polypeptide is 3'-5' ssDNA/RNA exonuclease TatD (Pantoea sp. (strain At-9b)).